Consider the following 409-residue polypeptide: Probable ferredoxin reductase CtmF (409 aa).

FAD-binding residues include Ala-15, Asp-37, Lys-50, Val-83, Asp-279, and Val-298.

The protein belongs to the FAD-dependent oxidoreductase family. FAD is required as a cofactor.

Its pathway is terpene metabolism; monoterpene degradation. Its function is as follows. Involved in the degradation of the cyclic monoterpene limonene. Probably part of an electron transfer system involved in the oxidation of limonene to perillyl alcohol. The chain is Probable ferredoxin reductase CtmF from Castellaniella defragrans (strain DSM 12143 / CCUG 39792 / 65Phen) (Alcaligenes defragrans).